Here is a 452-residue protein sequence, read N- to C-terminus: Retrograde protein of 51 kDa (452 aa).

A compositionally biased stretch (basic and acidic residues) spans 1–13 (MQKGAKIEDEGRQ). Positions 1-50 (MQKGAKIEDEGRQSRIQSRNFIIQRSDPRTRGSSVYSSRSSSYNVRSSIS) are disordered. The tract at residues 1-75 (MQKGAKIEDE…KGNREKEKRE (75 aa)) is head. Residues 14 to 23 (SRIQSRNFII) are compositionally biased toward polar residues. A compositionally biased stretch (low complexity) spans 33–50 (SSVYSSRSSSYNVRSSIS). The 353-residue stretch at 72–424 (EKREMQNLNE…KLLEGEESRV (353 aa)) folds into the IF rod domain. Positions 76–111 (MQNLNERLASYIEKVHFLDAQVKKLEAENEALRNRK) are coil 1A. A linker 1 region spans residues 112-121 (VEDLQPIRDA). A coil 1B region spans residues 122-259 (YENELRQARK…DLLDQLELLK (138 aa)). Ser156 carries the sulfoserine modification. The linker 12 stretch occupies residues 260 to 278 (PEPIQIKGMDYADFWKSEL). The coil 2 stretch occupies residues 279–424 (AKCVREINLA…KLLEGEESRV (146 aa)). The tail stretch occupies residues 425–452 (GLRTLVEQAIGTQSKGSASLKDAIQSSS).

It belongs to the intermediate filament family.

This chain is Retrograde protein of 51 kDa (RGP51), found in Lymnaea stagnalis (Great pond snail).